The chain runs to 823 residues: Leucine--tRNA ligase (823 aa).

A 'HIGH' region motif is present at residues 55 to 65; it reads PYPSGNLHIGH. Residues 590-594 carry the 'KMSKS' region motif; that stretch reads KMSKS. Residue lysine 593 coordinates ATP.

This sequence belongs to the class-I aminoacyl-tRNA synthetase family.

It localises to the cytoplasm. It catalyses the reaction tRNA(Leu) + L-leucine + ATP = L-leucyl-tRNA(Leu) + AMP + diphosphate. The chain is Leucine--tRNA ligase from Deinococcus radiodurans (strain ATCC 13939 / DSM 20539 / JCM 16871 / CCUG 27074 / LMG 4051 / NBRC 15346 / NCIMB 9279 / VKM B-1422 / R1).